The sequence spans 969 residues: Liprin-beta-1 (969 aa).

Position 37 is a phosphoserine (serine 37). Threonine 39 is subject to Phosphothreonine. At serine 40 the chain carries Phosphoserine. Positions 99-310 (GDVYQERLAR…CLSRYRKMQD (212 aa)) form a coiled coil. N6-acetyllysine is present on lysine 291. Disordered stretches follow at residues 342–361 (DLER…RDLL), 381–407 (LLPP…FEEG), and 424–482 (GVST…RKAR). Over residues 346 to 358 (STSSTPGMGSPSR) the composition is skewed to low complexity. Residues serine 403 and serine 435 each carry the phosphoserine modification. Residues 426 to 438 (STSSLQKSSSLGN) are compositionally biased toward low complexity. Basic and acidic residues predominate over residues 439 to 452 (LKKEASDGTDKAPT). A Glycyl lysine isopeptide (Lys-Gly) (interchain with G-Cter in SUMO2) cross-link involves residue lysine 440. Residue serine 500 is modified to Phosphoserine. The segment covering 518-529 (AGTSRSKGSQGT) has biased composition (polar residues). The tract at residues 518–593 (AGTSRSKGSQ…PRLGWSRDLG (76 aa)) is disordered. The residue at position 538 (serine 538) is a Phosphoserine. Basic residues predominate over residues 543 to 557 (KKSRGIMRLFGKLRR). Phosphoserine occurs at positions 560 and 595. 2 consecutive SAM domains span residues 606 to 670 (WTKE…LGSE) and 678 to 741 (LDFN…LRIN). Phosphoserine occurs at positions 753 and 757. The 73-residue stretch at 763 to 835 (VQQWTNHRVM…ATHFNLLIGA (73 aa)) folds into the SAM 3 domain. Serine 957, serine 959, and serine 961 each carry phosphoserine. Threonine 963 carries the post-translational modification Phosphothreonine.

The protein belongs to the liprin family. Liprin-beta subfamily. As to quaternary structure, forms homodimers and heterodimers. Interacts with S100A4 in a Ca(2+)-dependent mode. Part of a cortical microtubule stabilization complex (CMSC) composed of KANK1, PPFIA1, PPFIBP1, ERC1/ELKS, PHLDB2/LL5beta, CLASPs, KIF21A and possibly additional interactors; within CMSCs KANK1 and PHLDB2/LL5beta seem to be the core components for recruiting microtubule-binding proteins KIF21A and CLASPs, whereas PPFIA1, PPFIBP1 and ERC1/ELKS serve as scaffolds for protein clustering. Interacts with KANK1 (via CC1 domain, residues 244-339).

Its subcellular location is the cytoplasm. It is found in the cell cortex. May regulate the disassembly of focal adhesions. Did not bind receptor-like tyrosine phosphatases type 2A. This is Liprin-beta-1 (Ppfibp1) from Mus musculus (Mouse).